Reading from the N-terminus, the 397-residue chain is Stearoyl-[acyl-carrier-protein] 9-desaturase, chloroplastic (397 aa).

The N-terminal 33 residues, 1–33 (MALNFNAIASKSQKLPCFALPPKATLRSPKFSM), are a transit peptide targeting the chloroplast. The Fe cation site is built by Glu-138, Glu-176, His-179, Glu-229, Glu-262, and His-265.

It belongs to the fatty acid desaturase type 2 family. Homodimer. Requires Fe(2+) as cofactor.

It localises to the plastid. It is found in the chloroplast. The enzyme catalyses octadecanoyl-[ACP] + 2 reduced [2Fe-2S]-[ferredoxin] + O2 + 2 H(+) = (9Z)-octadecenoyl-[ACP] + 2 oxidized [2Fe-2S]-[ferredoxin] + 2 H2O. It functions in the pathway lipid metabolism; fatty acid metabolism. Converts stearoyl-ACP to oleoyl-ACP by introduction of a cis double bond between carbons 9 and 10 of the acyl chain. This is Stearoyl-[acyl-carrier-protein] 9-desaturase, chloroplastic from Gossypium hirsutum (Upland cotton).